The primary structure comprises 176 residues: 3-hydroxydecanoyl-[acyl-carrier-protein] dehydratase (176 aa).

The active site involves H71.

It belongs to the thioester dehydratase family. FabA subfamily. Homodimer.

It is found in the cytoplasm. The enzyme catalyses a (3R)-hydroxyacyl-[ACP] = a (2E)-enoyl-[ACP] + H2O. It carries out the reaction (3R)-hydroxydecanoyl-[ACP] = (2E)-decenoyl-[ACP] + H2O. It catalyses the reaction (2E)-decenoyl-[ACP] = (3Z)-decenoyl-[ACP]. It participates in lipid metabolism; fatty acid biosynthesis. Necessary for the introduction of cis unsaturation into fatty acids. Catalyzes the dehydration of (3R)-3-hydroxydecanoyl-ACP to E-(2)-decenoyl-ACP and then its isomerization to Z-(3)-decenoyl-ACP. Can catalyze the dehydratase reaction for beta-hydroxyacyl-ACPs with saturated chain lengths up to 16:0, being most active on intermediate chain length. The polypeptide is 3-hydroxydecanoyl-[acyl-carrier-protein] dehydratase (Rhodopseudomonas palustris (strain BisB18)).